A 268-amino-acid polypeptide reads, in one-letter code: Ribonuclease P protein subunit p30 (268 aa).

At Ala-2 the chain carries N-acetylalanine. Phosphoserine is present on Ser-251.

This sequence belongs to the eukaryotic/archaeal RNase P protein component 3 family. In terms of assembly, component of nuclear RNase P and RNase MRP ribonucleoproteins. RNase P consists of a catalytic RNA moiety and about 10 protein subunits; POP1, POP4, POP5, POP7, RPP14, RPP21, RPP25, RPP30, RPP38 and RPP40. Within the RNase P complex, POP1, POP7 and RPP25 form the 'finger' subcomplex, POP5, RPP14, RPP40 and homodimeric RPP30 form the 'palm' subcomplex, and RPP21, POP4 and RPP38 form the 'wrist' subcomplex. All subunits of the RNase P complex interact with the catalytic RNA. Several subunits of RNase P are also part of the RNase MRP complex. RNase MRP consists of a catalytic RNA moiety and about 8 protein subunits; POP1, POP7, RPP25, RPP30, RPP38, RPP40 and possibly also POP4 and POP5.

The protein resides in the nucleus. The protein localises to the nucleolus. Functionally, component of ribonuclease P, a ribonucleoprotein complex that generates mature tRNA molecules by cleaving their 5'-ends. Also a component of the MRP ribonuclease complex, which cleaves pre-rRNA sequences. This Bos taurus (Bovine) protein is Ribonuclease P protein subunit p30 (RPP30).